A 181-amino-acid polypeptide reads, in one-letter code: NADH-quinone oxidoreductase subunit I (181 aa).

4Fe-4S ferredoxin-type domains lie at 52 to 81 (TRDS…LKKS) and 91 to 120 (EFFR…LISD). [4Fe-4S] cluster-binding residues include Cys61, Cys64, Cys67, Cys71, Cys100, Cys103, Cys106, and Cys110.

The protein belongs to the complex I 23 kDa subunit family. In terms of assembly, NDH-1 is composed of 13 different subunits. Subunits NuoA, H, J, K, L, M, N constitute the membrane sector of the complex. The cofactor is [4Fe-4S] cluster.

It is found in the cell inner membrane. The catalysed reaction is a quinone + NADH + 5 H(+)(in) = a quinol + NAD(+) + 4 H(+)(out). Its function is as follows. NDH-1 shuttles electrons from NADH, via FMN and iron-sulfur (Fe-S) centers, to quinones in the respiratory chain. The immediate electron acceptor for the enzyme in this species is believed to be ubiquinone. Couples the redox reaction to proton translocation (for every two electrons transferred, four hydrogen ions are translocated across the cytoplasmic membrane), and thus conserves the redox energy in a proton gradient. This is NADH-quinone oxidoreductase subunit I from Blochmanniella floridana.